A 538-amino-acid chain; its full sequence is MAARSLWRTRTKLLVVGTALCGGSGAAFIASSDDPSTTLKLCTSIPVRLYRNTVTAASIAFDYEYSLLGLAEGSSERAKVKHEVHLRSAQKLQELCFKNGGIYIKLGQHIGQLEYLVPEEYVRTMRESMLNKCPISSYEQVCEVFKKEVGEMPDQVFAEFDPVPIASASLAQVHVARTHDGKKVAVKVQHAHMTDTAAADTAAVGVLVNTLHRIFPSFDYRWLLDEMSESLPKELDFLVEAKNNEKCLDNFRKLSPHIAEYVYAPTIYWNLSTSKLLTMEFMDGAQVNDVDKIRKLGIQPYEVSKLVSQTFAEMMFKHGFVHCDPHAANLIVRPDPSGKRNIYGKRKPQLVILDHGLYKELDFNTRFNYASLWKALVFSDAKAIKEHSEKLGAGDDLYVLFAGILTMRPWKQVIDTSVDHLVIQGNKEDVSELQMYASQYFSEISELLRRLPRVILLMLKTNDCLRSVNNELMQGSSLESFLIIGKVSSQAVLEAKRAEKKSLMKWLKVWFEGFSVEARLWVMQFALWILQVRKSLTL.

The signal sequence occupies residues 1 to 26 (MAARSLWRTRTKLLVVGTALCGGSGA).

It belongs to the protein kinase superfamily. ADCK protein kinase family.

The polypeptide is Putative ABC1 protein At2g40090 (Arabidopsis thaliana (Mouse-ear cress)).